The following is a 92-amino-acid chain: Acylphosphatase (92 aa).

The Acylphosphatase-like domain occupies 3–92 (TKHVLVSGIV…GPRSTHFEVT (90 aa)). Catalysis depends on residues R18 and N36.

The protein belongs to the acylphosphatase family.

The enzyme catalyses an acyl phosphate + H2O = a carboxylate + phosphate + H(+). This chain is Acylphosphatase (acyP), found in Alcanivorax borkumensis (strain ATCC 700651 / DSM 11573 / NCIMB 13689 / SK2).